The following is a 143-amino-acid chain: Large-conductance mechanosensitive channel (143 aa).

Transmembrane regions (helical) follow at residues 10–30 (FAVK…GAFS) and 89–109 (GSFI…FLMV).

The protein belongs to the MscL family. In terms of assembly, homopentamer.

The protein localises to the cell inner membrane. Channel that opens in response to stretch forces in the membrane lipid bilayer. May participate in the regulation of osmotic pressure changes within the cell. This chain is Large-conductance mechanosensitive channel, found in Burkholderia pseudomallei (strain 668).